The chain runs to 316 residues: Small ribosomal subunit protein mS26 (316 aa).

The tract at residues 41–71 is disordered; it reads TTRSARDSVSIPPDSPNYIKVPEPPQSSEVR.

It belongs to the mitochondrion-specific ribosomal protein mS26 family. In terms of assembly, component of the mitochondrial small ribosomal subunit (mt-SSU). Mature N.crassa 74S mitochondrial ribosomes consist of a small (37S) and a large (54S) subunit. The 37S small subunit contains a 16S ribosomal RNA (16S mt-rRNA) and 32 different proteins. The 54S large subunit contains a 23S rRNA (23S mt-rRNA) and 42 different proteins.

It is found in the mitochondrion. In terms of biological role, component of the mitochondrial ribosome (mitoribosome), a dedicated translation machinery responsible for the synthesis of mitochondrial genome-encoded proteins, including at least some of the essential transmembrane subunits of the mitochondrial respiratory chain. The mitoribosomes are attached to the mitochondrial inner membrane and translation products are cotranslationally integrated into the membrane. The sequence is that of Small ribosomal subunit protein mS26 (pet123) from Neurospora crassa (strain ATCC 24698 / 74-OR23-1A / CBS 708.71 / DSM 1257 / FGSC 987).